A 239-amino-acid chain; its full sequence is Ribosomal RNA small subunit methyltransferase G (239 aa).

S-adenosyl-L-methionine contacts are provided by residues G78, F83, 129 to 130 (AE), and R148.

Belongs to the methyltransferase superfamily. RNA methyltransferase RsmG family.

The protein localises to the cytoplasm. Its function is as follows. Specifically methylates the N7 position of a guanine in 16S rRNA. In Alkaliphilus oremlandii (strain OhILAs) (Clostridium oremlandii (strain OhILAs)), this protein is Ribosomal RNA small subunit methyltransferase G.